The primary structure comprises 175 residues: B9 domain-containing protein 2 (175 aa).

One can recognise a C2 B9-type domain in the interval 2–118 (AEVHVIGQIM…DCPTWRPLGS (117 aa)).

It belongs to the B9D family. As to quaternary structure, part of the tectonic-like complex (also named B9 complex). Interacts with TUBG1.

Its subcellular location is the cytoplasm. It is found in the cytoskeleton. It localises to the cilium basal body. The protein localises to the cilium axoneme. The protein resides in the nucleus. In terms of biological role, component of the tectonic-like complex, a complex localized at the transition zone of primary cilia and acting as a barrier that prevents diffusion of transmembrane proteins between the cilia and plasma membranes. In Bos taurus (Bovine), this protein is B9 domain-containing protein 2 (B9D2).